A 63-amino-acid chain; its full sequence is Overexpressed in colon carcinoma 1 protein homolog (63 aa).

Positions 1-10 are enriched in polar residues; sequence MGCGNSTATS. The interval 1–37 is disordered; it reads MGCGNSTATSAAAGRGKPGAVKDATEDSITEDDKRRN.

The protein belongs to the OCC1 family.

This chain is Overexpressed in colon carcinoma 1 protein homolog, found in Rattus norvegicus (Rat).